The chain runs to 211 residues: Thiamine-phosphate synthase (211 aa).

Residues 37–41 (QLRIK) and N69 each bind 4-amino-2-methyl-5-(diphosphooxymethyl)pyrimidine. 2 residues coordinate Mg(2+): D70 and D89. A 4-amino-2-methyl-5-(diphosphooxymethyl)pyrimidine-binding site is contributed by S108. 134–136 (TQT) contacts 2-[(2R,5Z)-2-carboxy-4-methylthiazol-5(2H)-ylidene]ethyl phosphate. K137 lines the 4-amino-2-methyl-5-(diphosphooxymethyl)pyrimidine pocket. Residues G166 and 186-187 (VS) each bind 2-[(2R,5Z)-2-carboxy-4-methylthiazol-5(2H)-ylidene]ethyl phosphate.

Belongs to the thiamine-phosphate synthase family. Requires Mg(2+) as cofactor.

The catalysed reaction is 2-[(2R,5Z)-2-carboxy-4-methylthiazol-5(2H)-ylidene]ethyl phosphate + 4-amino-2-methyl-5-(diphosphooxymethyl)pyrimidine + 2 H(+) = thiamine phosphate + CO2 + diphosphate. The enzyme catalyses 2-(2-carboxy-4-methylthiazol-5-yl)ethyl phosphate + 4-amino-2-methyl-5-(diphosphooxymethyl)pyrimidine + 2 H(+) = thiamine phosphate + CO2 + diphosphate. It catalyses the reaction 4-methyl-5-(2-phosphooxyethyl)-thiazole + 4-amino-2-methyl-5-(diphosphooxymethyl)pyrimidine + H(+) = thiamine phosphate + diphosphate. Its pathway is cofactor biosynthesis; thiamine diphosphate biosynthesis; thiamine phosphate from 4-amino-2-methyl-5-diphosphomethylpyrimidine and 4-methyl-5-(2-phosphoethyl)-thiazole: step 1/1. Condenses 4-methyl-5-(beta-hydroxyethyl)thiazole monophosphate (THZ-P) and 2-methyl-4-amino-5-hydroxymethyl pyrimidine pyrophosphate (HMP-PP) to form thiamine monophosphate (TMP). The protein is Thiamine-phosphate synthase of Salmonella paratyphi B (strain ATCC BAA-1250 / SPB7).